Consider the following 227-residue polypeptide: Enolase-phosphatase E1 (227 aa).

This sequence belongs to the HAD-like hydrolase superfamily. MasA/MtnC family. As to quaternary structure, monomer. It depends on Mg(2+) as a cofactor.

It carries out the reaction 5-methylsulfanyl-2,3-dioxopentyl phosphate + H2O = 1,2-dihydroxy-5-(methylsulfanyl)pent-1-en-3-one + phosphate. Its pathway is amino-acid biosynthesis; L-methionine biosynthesis via salvage pathway; L-methionine from S-methyl-5-thio-alpha-D-ribose 1-phosphate: step 3/6. It functions in the pathway amino-acid biosynthesis; L-methionine biosynthesis via salvage pathway; L-methionine from S-methyl-5-thio-alpha-D-ribose 1-phosphate: step 4/6. Its function is as follows. Bifunctional enzyme that catalyzes the enolization of 2,3-diketo-5-methylthiopentyl-1-phosphate (DK-MTP-1-P) into the intermediate 2-hydroxy-3-keto-5-methylthiopentenyl-1-phosphate (HK-MTPenyl-1-P), which is then dephosphorylated to form the acireductone 1,2-dihydroxy-3-keto-5-methylthiopentene (DHK-MTPene). The protein is Enolase-phosphatase E1 of Pseudomonas fluorescens (strain Pf0-1).